We begin with the raw amino-acid sequence, 590 residues long: MVMAPIPQPWHQWPFLILFFLVLFSCESNLPCRNGVEATQRVFLYPQSPKVSSIVSKGYRTGYHFQPPKNWINDPNGPMYYNGIYHEFYQYNPNGSVWGNIVWGHSVSTDLINWIRLEPAIEGNTPSDINGCWTGSATILTGDQPVIIYTGADTEKRQVQNIVLPKNRSDPYLREWTKPKNNPLIEPVGPGLNSNQFRDPTTGWIGPDGLWRIAVGAELNGYSAALLYKSKDFMQWTRVDHPLYSSNASNMWECPDFFAVLPGKNNGLDLSAAIPNGAKHVLKMSLDSCDKYMIGVYDLKHDMFVPDTVLDDRRLWLRIDYGNYYASKSFFDSKKGRRIIWGWTNETDSTSDDVAKGWAGIHAIPRTIWLDGDGKRLLQWPIEEVESLRRNEVSHQGLELKKGDLFEIKGTDTLQADVEIDFELTSIDAADPFDPSWLLDTEKHCREADASVHGGLGPFGLVVLASDNMDEHTTVHFRVYKSEQKYMVLLCSDLRRSSLRPGLYTPAYGGFFEYDLEKEKKISLRTLIDRSAVESFGGGGRACIMARVYPAAVVDGATHMYAFNNGSSTVKVSQLKAWSMTRAQVNVRKG.

Residues 1-28 (MVMAPIPQPWHQWPFLILFFLVLFSCES) form the signal peptide. Substrate contacts are provided by residues 71-74 (WIND) and Gln-90. The active site involves Asp-74. Asn-94 carries N-linked (GlcNAc...) asparagine glycosylation. Substrate contacts are provided by residues Trp-98 and 133–134 (WT). A glycan (N-linked (GlcNAc...) asparagine) is linked at Asn-167. Residue 198-199 (RD) coordinates substrate. Asn-247 carries N-linked (GlcNAc...) asparagine glycosylation. Substrate-binding residues include Glu-253 and Asp-287. An N-linked (GlcNAc...) asparagine glycan is attached at Asn-345. Cys-445 and Cys-491 are joined by a disulfide. Asn-565 carries N-linked (GlcNAc...) asparagine glycosylation.

This sequence belongs to the glycosyl hydrolase 32 family. Expressed in leaves. Expressed at moderate levels in roots and flowers, and weakly in seeds.

Its subcellular location is the secreted. The protein localises to the extracellular space. The protein resides in the apoplast. It is found in the cell wall. The catalysed reaction is Hydrolysis of terminal non-reducing beta-D-fructofuranoside residues in beta-D-fructofuranosides.. In terms of biological role, may play a role in sucrose partitioning during seed development and in stress response. The sequence is that of Beta-fructofuranosidase, insoluble isoenzyme 4 (CIN4) from Oryza sativa subsp. japonica (Rice).